Consider the following 523-residue polypeptide: 2-isopropylmalate synthase (523 aa).

One can recognise a Pyruvate carboxyltransferase domain in the interval 5–267 (VIIFDTTLRD…HTAINHQEIW (263 aa)). 4 residues coordinate Mn(2+): aspartate 14, histidine 202, histidine 204, and asparagine 238. Residues 392–523 (RLDYFSVQSG…QHNENNKETV (132 aa)) form a regulatory domain region.

The protein belongs to the alpha-IPM synthase/homocitrate synthase family. LeuA type 1 subfamily. As to quaternary structure, homodimer. It depends on Mn(2+) as a cofactor.

Its subcellular location is the cytoplasm. The catalysed reaction is 3-methyl-2-oxobutanoate + acetyl-CoA + H2O = (2S)-2-isopropylmalate + CoA + H(+). It functions in the pathway amino-acid biosynthesis; L-leucine biosynthesis; L-leucine from 3-methyl-2-oxobutanoate: step 1/4. Functionally, catalyzes the condensation of the acetyl group of acetyl-CoA with 3-methyl-2-oxobutanoate (2-ketoisovalerate) to form 3-carboxy-3-hydroxy-4-methylpentanoate (2-isopropylmalate). This chain is 2-isopropylmalate synthase, found in Escherichia coli O45:K1 (strain S88 / ExPEC).